Here is a 125-residue protein sequence, read N- to C-terminus: MIYGIGIDIVEINRIKKIVIRSGDKLAKRILRKSELKLYYSKEYPVRFLSKRFAAKEAVLKAFGTGMSQGITFSQFEIFNDDLGRPMLRFFSQAAVLAKKLDLVRTHVSVSDTGLYACSIVIFEC.

Positions 8 and 57 each coordinate Mg(2+).

Belongs to the P-Pant transferase superfamily. AcpS family. It depends on Mg(2+) as a cofactor.

The protein resides in the cytoplasm. It catalyses the reaction apo-[ACP] + CoA = holo-[ACP] + adenosine 3',5'-bisphosphate + H(+). Its function is as follows. Transfers the 4'-phosphopantetheine moiety from coenzyme A to a Ser of acyl-carrier-protein. In Blochmanniella floridana, this protein is Holo-[acyl-carrier-protein] synthase.